A 315-amino-acid polypeptide reads, in one-letter code: Ribose-phosphate pyrophosphokinase (315 aa).

Residues 37-39 and 96-97 each bind ATP; these read DGE and RQ. His-131 and Asp-170 together coordinate Mg(2+). Lys-194 is an active-site residue. D-ribose 5-phosphate-binding positions include Arg-196, Asp-220, and 224–228; that span reads DTGGT.

This sequence belongs to the ribose-phosphate pyrophosphokinase family. Class I subfamily. As to quaternary structure, homohexamer. The cofactor is Mg(2+).

It is found in the cytoplasm. The enzyme catalyses D-ribose 5-phosphate + ATP = 5-phospho-alpha-D-ribose 1-diphosphate + AMP + H(+). It functions in the pathway metabolic intermediate biosynthesis; 5-phospho-alpha-D-ribose 1-diphosphate biosynthesis; 5-phospho-alpha-D-ribose 1-diphosphate from D-ribose 5-phosphate (route I): step 1/1. In terms of biological role, involved in the biosynthesis of the central metabolite phospho-alpha-D-ribosyl-1-pyrophosphate (PRPP) via the transfer of pyrophosphoryl group from ATP to 1-hydroxyl of ribose-5-phosphate (Rib-5-P). This is Ribose-phosphate pyrophosphokinase from Shewanella oneidensis (strain ATCC 700550 / JCM 31522 / CIP 106686 / LMG 19005 / NCIMB 14063 / MR-1).